Consider the following 160-residue polypeptide: Protein cornichon homolog 3 (160 aa).

Over 1–10 the chain is Cytoplasmic; the sequence is MAFTFAAFCY. A helical transmembrane segment spans residues 11–31; the sequence is MLSLVLCAALIFFAIWHIIAF. At 32 to 72 the chain is on the lumenal side; the sequence is DELRTDFKSPIDQCNPVHARERLRNIERICFLLRKLVLPEY. A helical membrane pass occupies residues 73 to 93; it reads SIHSLFCIMFLCAQEWLTLGL. At 94-138 the chain is on the cytoplasmic side; the sequence is NVPLLFYHFWRYFHCPADSSELAYDPPVVMNADTLSYCQKEAWCK. A helical membrane pass occupies residues 139–159; that stretch reads LAFYLLSFFYYLYCMIYTLVS. Residue S160 is a topological domain, lumenal.

This sequence belongs to the cornichon family. Acts as an auxiliary subunit for AMPA-selective glutamate receptors (AMPARs). Found in a complex with GRIA1, GRIA2, GRIA3, GRIA4, CNIH2, CACNG2, CACNG3, CACNG4, CACNG5, CACNG7 and CACNG8. In terms of tissue distribution, expression is up-regulated in dorsolateral prefrontal cortex of patients with schizophrenia (postmortem brain study).

It localises to the postsynaptic cell membrane. Functionally, regulates the trafficking and gating properties of AMPA-selective glutamate receptors (AMPARs). Promotes their targeting to the cell membrane and synapses and modulates their gating properties by regulating their rates of activation, deactivation and desensitization. The polypeptide is Protein cornichon homolog 3 (CNIH3) (Homo sapiens (Human)).